The chain runs to 732 residues: DNA ligase (732 aa).

NAD(+) contacts are provided by residues D47–D51, S96–I97, and E133. The active-site N6-AMP-lysine intermediate is K135. Residues R156, E196, K317, and K341 each contribute to the NAD(+) site. Positions 470, 473, 488, and 494 each coordinate Zn(2+). In terms of domain architecture, BRCT spans R653–R732.

It belongs to the NAD-dependent DNA ligase family. LigA subfamily. Mg(2+) is required as a cofactor. The cofactor is Mn(2+).

It catalyses the reaction NAD(+) + (deoxyribonucleotide)n-3'-hydroxyl + 5'-phospho-(deoxyribonucleotide)m = (deoxyribonucleotide)n+m + AMP + beta-nicotinamide D-nucleotide.. In terms of biological role, DNA ligase that catalyzes the formation of phosphodiester linkages between 5'-phosphoryl and 3'-hydroxyl groups in double-stranded DNA using NAD as a coenzyme and as the energy source for the reaction. It is essential for DNA replication and repair of damaged DNA. This Paracidovorax citrulli (strain AAC00-1) (Acidovorax citrulli) protein is DNA ligase.